The sequence spans 558 residues: Formate--tetrahydrofolate ligase (558 aa).

66 to 73 provides a ligand contact to ATP; the sequence is TPAGEGKT.

Belongs to the formate--tetrahydrofolate ligase family.

It catalyses the reaction (6S)-5,6,7,8-tetrahydrofolate + formate + ATP = (6R)-10-formyltetrahydrofolate + ADP + phosphate. The protein operates within one-carbon metabolism; tetrahydrofolate interconversion. The polypeptide is Formate--tetrahydrofolate ligase (Neisseria meningitidis serogroup A / serotype 4A (strain DSM 15465 / Z2491)).